Reading from the N-terminus, the 155-residue chain is Transcription antitermination protein NusB (155 aa).

The protein belongs to the NusB family.

Involved in transcription antitermination. Required for transcription of ribosomal RNA (rRNA) genes. Binds specifically to the boxA antiterminator sequence of the ribosomal RNA (rrn) operons. This is Transcription antitermination protein NusB from Vibrio parahaemolyticus serotype O3:K6 (strain RIMD 2210633).